Reading from the N-terminus, the 690-residue chain is Iron-sulfur clusters transporter ATM1, mitochondrial (690 aa).

A mitochondrion-targeting transit peptide spans 1 to 26 (MLLLPRCPVIGRIVRSKFRSGLIRNH). Residues 27–110 (SPVIFTVSKL…PKGNNKVRIR (84 aa)) lie on the Mitochondrial matrix side of the membrane. Residues 111 to 132 (VLIALGLLISAKILNVQVPFFF) traverse the membrane as a helical segment. An ABC transmembrane type-1 domain is found at 111-401 (VLIALGLLIS…LGSVYRDLKQ (291 aa)). At 133 to 155 (KQTIDSMNIAWDDPTVALPAAIG) the chain is on the mitochondrial intermembrane side. Residues 156–179 (LTILCYGVARFGSVLFGELRNAVF) traverse the membrane as a helical segment. The Mitochondrial matrix segment spans residues 180–228 (AKVAQNAIRTVSLQTFQHLMKLDLGWHLSRQTGGLTRAMDRGTKGISQV). The helical transmembrane segment at 229 to 252 (LTAMVFHIIPISFEISVVCGILTY) threads the bilayer. A topological domain (mitochondrial intermembrane) is located at residue Gln-253. The chain crosses the membrane as a helical span at residues 254 to 274 (FGASFAAITFSTMLLYSIFTI). Residues 275 to 340 (KTTAWRTHFR…SQIKVSQSLA (66 aa)) lie on the Mitochondrial matrix side of the membrane. Glutathione-binding positions include 280 to 284 (RTHFR) and 343 to 346 (NSGQ). A helical membrane pass occupies residues 341-359 (FLNSGQNLIFTTALTAMMY). Residues 360–374 (MGCTGVIGGNLTVGD) are Mitochondrial intermembrane-facing. Residues 375–396 (LVLINQLVFQLSVPLNFLGSVY) traverse the membrane as a helical segment. Gly-393 is a binding site for glutathione. Residues 397–690 (RDLKQSLIDM…ENELKDQQEL (294 aa)) are Mitochondrial matrix-facing. The 237-residue stretch at 436-672 (ITFENVTFGY…PGSLYRELWT (237 aa)) folds into the ABC transporter domain. Residues Tyr-445 and 469 to 480 (GSSGSGKSTILK) each bind ATP.

Belongs to the ABC transporter superfamily. ABCB family. Heavy Metal importer (TC 3.A.1.210) subfamily. As to quaternary structure, homodimer.

It is found in the mitochondrion inner membrane. Its function is as follows. Performs an essential function in the generation of cytoplasmic iron-sulfur proteins by mediating the ATP-dependent export of Fe/S cluster precursors synthesized by NFS1 and other mitochondrial proteins. Hydrolyzes ATP. Binds glutathione and may function by transporting a glutathione-conjugated iron-sulfur compound. The protein is Iron-sulfur clusters transporter ATM1, mitochondrial of Saccharomyces cerevisiae (strain ATCC 204508 / S288c) (Baker's yeast).